The sequence spans 64 residues: Alpha-conotoxin CnIC (64 aa).

A signal peptide spans 1-21 (MGMRMMFTVFLLVVLTTTVVS). Residues 22–47 (FPSDSASDVRDDEAKDERSDMYKSKR) constitute a propeptide that is removed on maturation. At N48 the chain carries Deamidated asparagine; in CnIH; partial. Disulfide bonds link C51–C56 and C52–C62. The residue at position 62 (C62) is a Cysteine amide.

Belongs to the conotoxin A superfamily. As to expression, expressed by the venom duct.

Its subcellular location is the secreted. Functionally, alpha-conotoxins act on postsynaptic membranes, they bind to the nicotinic acetylcholine receptors (nAChR) and thus inhibit them. The chain is Alpha-conotoxin CnIC from Conus consors (Singed cone).